We begin with the raw amino-acid sequence, 297 residues long: Phosphoribosylaminoimidazole-succinocarboxamide synthase (297 aa).

The protein belongs to the SAICAR synthetase family.

The enzyme catalyses 5-amino-1-(5-phospho-D-ribosyl)imidazole-4-carboxylate + L-aspartate + ATP = (2S)-2-[5-amino-1-(5-phospho-beta-D-ribosyl)imidazole-4-carboxamido]succinate + ADP + phosphate + 2 H(+). It participates in purine metabolism; IMP biosynthesis via de novo pathway; 5-amino-1-(5-phospho-D-ribosyl)imidazole-4-carboxamide from 5-amino-1-(5-phospho-D-ribosyl)imidazole-4-carboxylate: step 1/2. The polypeptide is Phosphoribosylaminoimidazole-succinocarboxamide synthase (Mycobacterium sp. (strain JLS)).